The chain runs to 207 residues: Probable GTP-binding protein EngB (207 aa).

Positions 22–194 constitute an EngB-type G domain; that stretch reads DLPEIAFAGR…WRRIEEVLPA (173 aa). GTP contacts are provided by residues 30-37, 57-61, 75-78, 142-145, and 173-175; these read GRSNVGKS, GRTQL, DLPG, TKCD, and FSA. The Mg(2+) site is built by Ser-37 and Thr-59.

The protein belongs to the TRAFAC class TrmE-Era-EngA-EngB-Septin-like GTPase superfamily. EngB GTPase family. Mg(2+) is required as a cofactor.

In terms of biological role, necessary for normal cell division and for the maintenance of normal septation. This chain is Probable GTP-binding protein EngB, found in Geotalea daltonii (strain DSM 22248 / JCM 15807 / FRC-32) (Geobacter daltonii).